A 245-amino-acid polypeptide reads, in one-letter code: uncharacterized protein (245 aa).

Positions 33–176 (QRAAYQQVQA…SSQRDMLTAT (144 aa)) form a coiled coil.

This is an uncharacterized protein from Mycobacterium tuberculosis (strain CDC 1551 / Oshkosh).